The following is a 447-amino-acid chain: MTSRKYFGTDGIRGRVGQFPITPEFMLKLGWAAGMAFRKMGACRILVGKDTRISGYMFESALEAGLSAAGADVLLLGPMPTPAIAYLTRTFHAEAGIVISASHNPHYDNGIKFFSGQGTKLPDEIEMMIEELLDAPMTVAESENLGKVSRINDAAGRYIEFCKSSVPTSTDFAGLKVVIDCAHGATYKVAPNVFRELGAQVVVLSAQPDGLNINKDCGSTHMEALQAAVLAEHADMGIGFDGDGDRVLMVDHTGTIVDGDELLYIIARDLHERGRLQGGVVGTLMSNLGLELALAEQGIPFVRANVGDRYVIAELLERNWQIGGENSGHIVCFQHATTGDAIIASLQVILALRRSGVSLAEARLKLRKCPQILINVRFAGSGVDPVSHPSVKEACARVTEQMAGRGRVLLRKSGTEPLVRVMVEGEDETQVRAYAEELAKLVTEVCA.

S102 acts as the Phosphoserine intermediate in catalysis. Positions 102, 241, 243, and 245 each coordinate Mg(2+). S102 carries the phosphoserine modification.

It belongs to the phosphohexose mutase family. Requires Mg(2+) as cofactor. In terms of processing, activated by phosphorylation.

It carries out the reaction alpha-D-glucosamine 1-phosphate = D-glucosamine 6-phosphate. Its function is as follows. Catalyzes the conversion of glucosamine-6-phosphate to glucosamine-1-phosphate. This chain is Phosphoglucosamine mutase, found in Pseudomonas syringae pv. syringae (strain B728a).